We begin with the raw amino-acid sequence, 375 residues long: Succinyl-diaminopimelate desuccinylase (375 aa).

H66 is a binding site for Zn(2+). Residue D68 is part of the active site. D99 is a Zn(2+) binding site. Catalysis depends on E133, which acts as the Proton acceptor. 3 residues coordinate Zn(2+): E134, E162, and H348.

This sequence belongs to the peptidase M20A family. DapE subfamily. Homodimer. Zn(2+) is required as a cofactor. Co(2+) serves as cofactor.

The enzyme catalyses N-succinyl-(2S,6S)-2,6-diaminopimelate + H2O = (2S,6S)-2,6-diaminopimelate + succinate. The protein operates within amino-acid biosynthesis; L-lysine biosynthesis via DAP pathway; LL-2,6-diaminopimelate from (S)-tetrahydrodipicolinate (succinylase route): step 3/3. Catalyzes the hydrolysis of N-succinyl-L,L-diaminopimelic acid (SDAP), forming succinate and LL-2,6-diaminopimelate (DAP), an intermediate involved in the bacterial biosynthesis of lysine and meso-diaminopimelic acid, an essential component of bacterial cell walls. In Enterobacter sp. (strain 638), this protein is Succinyl-diaminopimelate desuccinylase.